The chain runs to 115 residues: Iron-sulfur cluster insertion protein ErpA (115 aa).

Iron-sulfur cluster is bound by residues Cys-43, Cys-107, and Cys-109.

It belongs to the HesB/IscA family. As to quaternary structure, homodimer. It depends on iron-sulfur cluster as a cofactor.

Required for insertion of 4Fe-4S clusters for at least IspG. The polypeptide is Iron-sulfur cluster insertion protein ErpA (Buchnera aphidicola subsp. Baizongia pistaciae (strain Bp)).